The following is a 398-amino-acid chain: MPVPASWPHLPSPFLLMTLLLGRLTGVAGEEELQVIQPDKSISVAAGESATLHCTVTSLIPVGPIQWFRGAGPGRELIYNQKEGHFPRVTTVSDLTKRNNMDFSIRISNITPADAGTYYCVKFRKGSPDHVEFKSGAGTELSVRAKPSAPVVSGPAARATPQHTVSFTCESHGFSPRDITLKWFKNGNELSDFQTNVDPAGDSVSYSIHSTAKVVLTREDVHSQVICEVAHVTLQGDPLRGTANLSETIRVPPTLEVTQQPVRAENQVNVTCQVRKFYPQRLQLTWLENGNVSRTETASTLTENKDGTYNWMSWLLVNVSAHRDDVKLTCQVEHDGQPAVSKSHDLKVSAHPKEQGSNTAPGPALASAAPLLIAFLLGPKVLLVVGVSVIYVYWKQKA.

An N-terminal signal peptide occupies residues 1–29 (MPVPASWPHLPSPFLLMTLLLGRLTGVAG). The Extracellular portion of the chain corresponds to 30 to 371 (EEELQVIQPD…GPALASAAPL (342 aa)). An Ig-like V-type domain is found at 31-136 (EELQVIQPDK…SPDHVEFKSG (106 aa)). 2 disulfide bridges follow: cysteine 54-cysteine 120 and cysteine 169-cysteine 227. Ig-like C1-type domains follow at residues 147 to 246 (PSAP…ANLS) and 253 to 347 (PTLE…HDLK). Asparagine 244, asparagine 291, and asparagine 318 each carry an N-linked (GlcNAc...) asparagine glycan. Cysteine 272 and cysteine 330 are oxidised to a cystine. Residues 337-354 (QPAVSKSHDLKVSAHPKE) show a composition bias toward basic and acidic residues. The interval 337–361 (QPAVSKSHDLKVSAHPKEQGSNTAP) is disordered. The chain crosses the membrane as a helical span at residues 372-392 (LIAFLLGPKVLLVVGVSVIYV). At 393–398 (YWKQKA) the chain is on the cytoplasmic side.

Its subcellular location is the membrane. Functionally, immunoglobulin-like cell surface receptor involved in the negative regulation of receptor tyrosine kinase-coupled signaling processes. In Homo sapiens (Human), this protein is Signal-regulatory protein beta-1 isoform 3 (SIRPB1).